We begin with the raw amino-acid sequence, 112 residues long: uncharacterized protein (112 aa).

A run of 3 helical transmembrane segments spans residues 33–53 (PSPLLLSLLLHYTVLFSPFGA), 58–78 (LYIYIYIYIYIYIYMCINVCT), and 91–111 (CVYVCTHFNIYIHTYIYLLFV).

The protein localises to the membrane. This is an uncharacterized protein from Saccharomyces cerevisiae (strain ATCC 204508 / S288c) (Baker's yeast).